A 487-amino-acid polypeptide reads, in one-letter code: Protein nucleotidyltransferase YdiU (487 aa).

Residues G91, G93, R94, K114, D126, G127, R177, and R184 each coordinate ATP. Residue D253 is the Proton acceptor of the active site. Residues N254 and D263 each contribute to the Mg(2+) site. D263 contributes to the ATP binding site.

The protein belongs to the SELO family. The cofactor is Mg(2+). It depends on Mn(2+) as a cofactor.

It catalyses the reaction L-seryl-[protein] + ATP = 3-O-(5'-adenylyl)-L-seryl-[protein] + diphosphate. The catalysed reaction is L-threonyl-[protein] + ATP = 3-O-(5'-adenylyl)-L-threonyl-[protein] + diphosphate. The enzyme catalyses L-tyrosyl-[protein] + ATP = O-(5'-adenylyl)-L-tyrosyl-[protein] + diphosphate. It carries out the reaction L-histidyl-[protein] + UTP = N(tele)-(5'-uridylyl)-L-histidyl-[protein] + diphosphate. It catalyses the reaction L-seryl-[protein] + UTP = O-(5'-uridylyl)-L-seryl-[protein] + diphosphate. The catalysed reaction is L-tyrosyl-[protein] + UTP = O-(5'-uridylyl)-L-tyrosyl-[protein] + diphosphate. In terms of biological role, nucleotidyltransferase involved in the post-translational modification of proteins. It can catalyze the addition of adenosine monophosphate (AMP) or uridine monophosphate (UMP) to a protein, resulting in modifications known as AMPylation and UMPylation. This Yersinia pestis (strain Pestoides F) protein is Protein nucleotidyltransferase YdiU.